Consider the following 322-residue polypeptide: Solute carrier family 35 member B1 (322 aa).

Helical transmembrane passes span 12–32 (LRLP…GILQ), 51–71 (FALT…KILI), 85–105 (WLYA…NSAL), 136–156 (YPLA…LFMY), 168–188 (TVGF…LTGV), 210–230 (LWST…WEFL), 243–263 (ILLF…TVVY), and 285–305 (VILF…LVFL). The Di-lysine motif signature appears at 318–322 (KKTSH).

Belongs to the nucleotide-sugar transporter family. SLC35B subfamily.

It is found in the endoplasmic reticulum membrane. It catalyses the reaction ADP(in) + ATP(out) = ADP(out) + ATP(in). It carries out the reaction UDP(out) + ATP(in) = UDP(in) + ATP(out). The enzyme catalyses UTP(out) + ATP(in) = UTP(in) + ATP(out). The catalysed reaction is dATP(out) + ATP(in) = dATP(in) + ATP(out). Functionally, ATP:ADP antiporter that catalyzes the exchange of ATP and ADP across the endoplasmic reticulum (ER) membrane. Imports ATP from the cytosol to the ER lumen and exports ADP in the opposite direction. Regulates ER energy metabolism and protein biogenesis. Appears to be part of a calcium-dependent ER to cytosol low energy response axis, where calcium efflux from ER to the cytosol triggers ATP import into the ER lumen to maintain sufficient ATP supply. Provides ATP to ER chaperone HSPA5 that drives protein folding and trafficking in the ER. Can transport dATP, UTP or UDP in exchange for ATP, but the physiological relevance of this process remains to be established. The protein is Solute carrier family 35 member B1 (Slc35b1) of Mus musculus (Mouse).